We begin with the raw amino-acid sequence, 189 residues long: Peptidyl-tRNA hydrolase (189 aa).

Position 14 (Tyr14) interacts with tRNA. His19 (proton acceptor) is an active-site residue. TRNA contacts are provided by Tyr64, Asn66, and Asn112.

Belongs to the PTH family. As to quaternary structure, monomer.

The protein resides in the cytoplasm. It catalyses the reaction an N-acyl-L-alpha-aminoacyl-tRNA + H2O = an N-acyl-L-amino acid + a tRNA + H(+). Its function is as follows. Hydrolyzes ribosome-free peptidyl-tRNAs (with 1 or more amino acids incorporated), which drop off the ribosome during protein synthesis, or as a result of ribosome stalling. In terms of biological role, catalyzes the release of premature peptidyl moieties from peptidyl-tRNA molecules trapped in stalled 50S ribosomal subunits, and thus maintains levels of free tRNAs and 50S ribosomes. In Clostridium botulinum (strain Langeland / NCTC 10281 / Type F), this protein is Peptidyl-tRNA hydrolase.